A 335-amino-acid polypeptide reads, in one-letter code: Holliday junction branch migration complex subunit RuvB (335 aa).

The segment at 1–181 (MERIIEIEKM…FGMNFWMQFY (181 aa)) is large ATPase domain (RuvB-L). ATP contacts are provided by residues leucine 20, arginine 21, glycine 62, lysine 65, threonine 66, threonine 67, 128–130 (EDF), arginine 171, tyrosine 181, and arginine 218. Threonine 66 lines the Mg(2+) pocket. The small ATPAse domain (RuvB-S) stretch occupies residues 182–252 (NIEELSQIIT…QARYALHELG (71 aa)). Residues 255–335 (DHGFDDLDLR…LPFEPNATLF (81 aa)) form a head domain (RuvB-H) region. DNA contacts are provided by arginine 309 and arginine 314.

The protein belongs to the RuvB family. In terms of assembly, homohexamer. Forms an RuvA(8)-RuvB(12)-Holliday junction (HJ) complex. HJ DNA is sandwiched between 2 RuvA tetramers; dsDNA enters through RuvA and exits via RuvB. An RuvB hexamer assembles on each DNA strand where it exits the tetramer. Each RuvB hexamer is contacted by two RuvA subunits (via domain III) on 2 adjacent RuvB subunits; this complex drives branch migration. In the full resolvosome a probable DNA-RuvA(4)-RuvB(12)-RuvC(2) complex forms which resolves the HJ.

Its subcellular location is the cytoplasm. It catalyses the reaction ATP + H2O = ADP + phosphate + H(+). Functionally, the RuvA-RuvB-RuvC complex processes Holliday junction (HJ) DNA during genetic recombination and DNA repair, while the RuvA-RuvB complex plays an important role in the rescue of blocked DNA replication forks via replication fork reversal (RFR). RuvA specifically binds to HJ cruciform DNA, conferring on it an open structure. The RuvB hexamer acts as an ATP-dependent pump, pulling dsDNA into and through the RuvAB complex. RuvB forms 2 homohexamers on either side of HJ DNA bound by 1 or 2 RuvA tetramers; 4 subunits per hexamer contact DNA at a time. Coordinated motions by a converter formed by DNA-disengaged RuvB subunits stimulates ATP hydrolysis and nucleotide exchange. Immobilization of the converter enables RuvB to convert the ATP-contained energy into a lever motion, pulling 2 nucleotides of DNA out of the RuvA tetramer per ATP hydrolyzed, thus driving DNA branch migration. The RuvB motors rotate together with the DNA substrate, which together with the progressing nucleotide cycle form the mechanistic basis for DNA recombination by continuous HJ branch migration. Branch migration allows RuvC to scan DNA until it finds its consensus sequence, where it cleaves and resolves cruciform DNA. In Wolinella succinogenes (strain ATCC 29543 / DSM 1740 / CCUG 13145 / JCM 31913 / LMG 7466 / NCTC 11488 / FDC 602W) (Vibrio succinogenes), this protein is Holliday junction branch migration complex subunit RuvB.